The following is a 183-amino-acid chain: MSESSIKIENVVASTKLAEEFDLTVIESQFEGAEYNKQKFPGLVYRVSDPKAAFLVFTSGKVVCTGAKNVADVHTVIGNMAKKLNSIGIKTMENPQITVQNIVASADLHTILNLNAIAIGLGLENIEYEPEQFPGLVYRIDEPKVVVLIFSSGKLVVTGGKTPEDCESGVEVVRQQLDNMGLL.

Repeat copies occupy residues 8–84 (IENV…AKKL) and 99–177 (VQNI…RQQL).

This sequence belongs to the TBP family.

In terms of biological role, general factor that plays a role in the activation of archaeal genes transcribed by RNA polymerase. Binds specifically to the TATA box promoter element which lies close to the position of transcription initiation. This chain is TATA-box-binding protein 2, found in Methanosarcina mazei (strain ATCC BAA-159 / DSM 3647 / Goe1 / Go1 / JCM 11833 / OCM 88) (Methanosarcina frisia).